The chain runs to 328 residues: Methionyl-tRNA formyltransferase (328 aa).

(6S)-5,6,7,8-tetrahydrofolate is bound at residue 121-124 (SLLP).

The protein belongs to the Fmt family.

It carries out the reaction L-methionyl-tRNA(fMet) + (6R)-10-formyltetrahydrofolate = N-formyl-L-methionyl-tRNA(fMet) + (6S)-5,6,7,8-tetrahydrofolate + H(+). Functionally, attaches a formyl group to the free amino group of methionyl-tRNA(fMet). The formyl group appears to play a dual role in the initiator identity of N-formylmethionyl-tRNA by promoting its recognition by IF2 and preventing the misappropriation of this tRNA by the elongation apparatus. The chain is Methionyl-tRNA formyltransferase from Burkholderia thailandensis (strain ATCC 700388 / DSM 13276 / CCUG 48851 / CIP 106301 / E264).